The sequence spans 158 residues: NAD(P)H-quinone oxidoreductase subunit J, chloroplastic (158 aa).

This sequence belongs to the complex I 30 kDa subunit family. As to quaternary structure, NDH is composed of at least 16 different subunits, 5 of which are encoded in the nucleus.

It localises to the plastid. It is found in the chloroplast thylakoid membrane. The enzyme catalyses a plastoquinone + NADH + (n+1) H(+)(in) = a plastoquinol + NAD(+) + n H(+)(out). It carries out the reaction a plastoquinone + NADPH + (n+1) H(+)(in) = a plastoquinol + NADP(+) + n H(+)(out). In terms of biological role, NDH shuttles electrons from NAD(P)H:plastoquinone, via FMN and iron-sulfur (Fe-S) centers, to quinones in the photosynthetic chain and possibly in a chloroplast respiratory chain. The immediate electron acceptor for the enzyme in this species is believed to be plastoquinone. Couples the redox reaction to proton translocation, and thus conserves the redox energy in a proton gradient. This chain is NAD(P)H-quinone oxidoreductase subunit J, chloroplastic, found in Cicer arietinum (Chickpea).